A 303-amino-acid polypeptide reads, in one-letter code: D-alanine--D-alanine ligase (303 aa).

The ATP-grasp domain maps to 99 to 293 (TYRFLKGTVE…FEELVEIILK (195 aa)). Residue 125–176 (GYPCVVKPRREGSSIGVFVCESDEEFQHALKEDLPRYGSVIVQKYIPGREMT) participates in ATP binding. Mg(2+)-binding residues include D248, E260, and N262.

It belongs to the D-alanine--D-alanine ligase family. It depends on Mg(2+) as a cofactor. Mn(2+) serves as cofactor.

It localises to the cytoplasm. It carries out the reaction 2 D-alanine + ATP = D-alanyl-D-alanine + ADP + phosphate + H(+). It participates in cell wall biogenesis; peptidoglycan biosynthesis. In terms of biological role, cell wall formation. The protein is D-alanine--D-alanine ligase of Thermotoga maritima (strain ATCC 43589 / DSM 3109 / JCM 10099 / NBRC 100826 / MSB8).